The sequence spans 319 residues: tRNA (guanine-N(7)-)-methyltransferase (319 aa).

3 residues coordinate S-adenosyl-L-methionine: glutamate 28, glutamate 51, and aspartate 75. Substrate-binding positions include aspartate 134 and 167–170; that span reads TKYE.

It belongs to the class I-like SAM-binding methyltransferase superfamily. TrmB family.

It carries out the reaction guanosine(46) in tRNA + S-adenosyl-L-methionine = N(7)-methylguanosine(46) in tRNA + S-adenosyl-L-homocysteine. Its pathway is tRNA modification; N(7)-methylguanine-tRNA biosynthesis. Catalyzes the formation of N(7)-methylguanine at position 46 (m7G46) in tRNA. This Coprothermobacter proteolyticus (strain ATCC 35245 / DSM 5265 / OCM 4 / BT) protein is tRNA (guanine-N(7)-)-methyltransferase.